The primary structure comprises 358 residues: Gap junction alpha-5 protein (358 aa).

Topologically, residues 1-19 (MGDWSFLGEFLEEVHKHST) are cytoplasmic. A helical transmembrane segment spans residues 20-40 (VIGKVWLTVLFIFRMLVLGTA). The Extracellular portion of the chain corresponds to 41–76 (AESSWGDEQADFQCDTMQPGCGNVCYDQAFPISHIR). Residues 77 to 97 (YWVLQIIFVSTPSLVYMGHAM) traverse the membrane as a helical segment. The Cytoplasmic portion of the chain corresponds to 98–164 (HTVRMQEKRK…CSILIRTTME (67 aa)). Residues 165 to 185 (VAFIVGQYLLYGIFLDTLHVC) form a helical membrane-spanning segment. The Extracellular portion of the chain corresponds to 186–205 (RRSPCPHPVNCYVSRPTEKN). A helical transmembrane segment spans residues 206-226 (VFIVFMLAVAALSLFLSLAEL). The Cytoplasmic portion of the chain corresponds to 227–358 (YHLGWKKLRQ…SKARSDDLSV (132 aa)). The interval 318–358 (AQKPEVPNGASPGHRLPHGYQSDKRRLSKASSKARSDDLSV) is disordered. Phosphoserine occurs at positions 353 and 357.

The protein belongs to the connexin family. Alpha-type (group II) subfamily. In terms of assembly, a connexon is composed of a hexamer of connexins.

It localises to the cell membrane. The protein resides in the cell junction. It is found in the gap junction. Functionally, one gap junction consists of a cluster of closely packed pairs of transmembrane channels, the connexons, through which materials of low MW diffuse from one cell to a neighboring cell. In Canis lupus familiaris (Dog), this protein is Gap junction alpha-5 protein (GJA5).